A 138-amino-acid chain; its full sequence is Homeobox protein HD-11 (138 aa).

The segment at residues 30-89 (CTGKQMRKTRLQTCVLNRIFEISRFPSSKTIVDLALLINVHPKSIQKWFQNTRQAIRKKG) is a DNA-binding region (homeobox).

The protein resides in the nucleus. The chain is Homeobox protein HD-11 (HD-11) from Encephalitozoon cuniculi (strain GB-M1) (Microsporidian parasite).